A 133-amino-acid polypeptide reads, in one-letter code: Small ribosomal subunit protein uS8 (133 aa).

The protein belongs to the universal ribosomal protein uS8 family. In terms of assembly, part of the 30S ribosomal subunit. Contacts proteins S5 and S12.

One of the primary rRNA binding proteins, it binds directly to 16S rRNA central domain where it helps coordinate assembly of the platform of the 30S subunit. This chain is Small ribosomal subunit protein uS8, found in Gloeothece citriformis (strain PCC 7424) (Cyanothece sp. (strain PCC 7424)).